The chain runs to 638 residues: 1,4-alpha-glucan branching enzyme GlgB (638 aa).

Asp-303 functions as the Nucleophile in the catalytic mechanism. Glu-356 serves as the catalytic Proton donor.

Belongs to the glycosyl hydrolase 13 family. GlgB subfamily. In terms of assembly, monomer.

The catalysed reaction is Transfers a segment of a (1-&gt;4)-alpha-D-glucan chain to a primary hydroxy group in a similar glucan chain.. It participates in glycan biosynthesis; glycogen biosynthesis. In terms of biological role, catalyzes the formation of the alpha-1,6-glucosidic linkages in glycogen by scission of a 1,4-alpha-linked oligosaccharide from growing alpha-1,4-glucan chains and the subsequent attachment of the oligosaccharide to the alpha-1,6 position. The chain is 1,4-alpha-glucan branching enzyme GlgB from Lactobacillus acidophilus (strain ATCC 700396 / NCK56 / N2 / NCFM).